The following is a 330-amino-acid chain: Src kinase-associated phosphoprotein 2-B (330 aa).

The disordered stretch occupies residues aspartate 57–aspartate 84. Residues alanine 59–aspartate 68 are compositionally biased toward acidic residues. The PH domain occupies glutamate 105–glycine 208. The segment at glutamate 236–threonine 261 is disordered. Over residues glutamate 240–threonine 250 the composition is skewed to basic and acidic residues. The span at glutamine 251–threonine 261 shows a compositional bias: polar residues. An SH3 domain is found at aspartate 268–aspartate 329.

It belongs to the SKAP family. Post-translationally, phosphorylated on tyrosines.

Its subcellular location is the cytoplasm. Functionally, may be involved in B-cell and macrophage adhesion processes. May play a role in src signaling pathway. This Xenopus laevis (African clawed frog) protein is Src kinase-associated phosphoprotein 2-B (skap2-b).